Here is a 378-residue protein sequence, read N- to C-terminus: Neutral protease 2 homolog ARB_04336 (378 aa).

Positions 1-19 (MKFFTALAAVGALLAPAVA) are cleaved as a signal peptide. The propeptide occupies 20-186 (LPTPASEASH…DYFSKGLDKR (167 aa)). Cystine bridges form between Cys192–Cys262 and Cys269–Cys287. His311 contacts Zn(2+). The active site involves Glu312. Zn(2+) is bound by residues His315 and Asp326.

This sequence belongs to the peptidase M35 family. Zn(2+) is required as a cofactor.

It localises to the secreted. It carries out the reaction Preferential cleavage of bonds with hydrophobic residues in P1'. Also 3-Asn-|-Gln-4 and 8-Gly-|-Ser-9 bonds in insulin B chain.. Its function is as follows. Secreted metalloproteinase that allows assimilation of proteinaceous substrates. Shows high activities on basic nuclear substrates such as histone and protamine. May be involved in virulence. The chain is Neutral protease 2 homolog ARB_04336 from Arthroderma benhamiae (strain ATCC MYA-4681 / CBS 112371) (Trichophyton mentagrophytes).